Reading from the N-terminus, the 277-residue chain is Undecaprenyl-diphosphatase (277 aa).

Transmembrane regions (helical) follow at residues 44–64, 86–106, 110–130, 184–204, 215–235, and 250–270; these read RAMA…VWEF, GNLL…ADLI, LFNP…MLWA, AATE…AVYS, GDLP…MIAV, and FAWY…FGWV.

It belongs to the UppP family.

Its subcellular location is the cell inner membrane. It carries out the reaction di-trans,octa-cis-undecaprenyl diphosphate + H2O = di-trans,octa-cis-undecaprenyl phosphate + phosphate + H(+). Catalyzes the dephosphorylation of undecaprenyl diphosphate (UPP). Confers resistance to bacitracin. The chain is Undecaprenyl-diphosphatase from Pseudomonas putida (strain ATCC 47054 / DSM 6125 / CFBP 8728 / NCIMB 11950 / KT2440).